Consider the following 303-residue polypeptide: tRNA-cytidine(32) 2-sulfurtransferase (303 aa).

Positions 45–50 (SGGKDS) match the PP-loop motif motif. [4Fe-4S] cluster is bound by residues C120, C123, and C211.

It belongs to the TtcA family. Homodimer. It depends on Mg(2+) as a cofactor. Requires [4Fe-4S] cluster as cofactor.

Its subcellular location is the cytoplasm. It carries out the reaction cytidine(32) in tRNA + S-sulfanyl-L-cysteinyl-[cysteine desulfurase] + AH2 + ATP = 2-thiocytidine(32) in tRNA + L-cysteinyl-[cysteine desulfurase] + A + AMP + diphosphate + H(+). It functions in the pathway tRNA modification. In terms of biological role, catalyzes the ATP-dependent 2-thiolation of cytidine in position 32 of tRNA, to form 2-thiocytidine (s(2)C32). The sulfur atoms are provided by the cysteine/cysteine desulfurase (IscS) system. This Methylobacillus flagellatus (strain ATCC 51484 / DSM 6875 / VKM B-1610 / KT) protein is tRNA-cytidine(32) 2-sulfurtransferase.